The sequence spans 284 residues: RAD52 motif-containing protein 1 (284 aa).

Residues 1-92 are necessary for nuclear localization and for nucleolar accumulation in response to heat shock; that stretch reads MAELVPFAVP…KQLFQKSPVK (92 aa). Residues 15–98 form the RRM domain; the sequence is KTLLVWELSS…SPVKVRLGTR (84 aa). The interval 90–133 is necessary for nuclear and nucleolar localization; that stretch reads PVKVRLGTRHKAVQHQALALNSSRCQELANYYFGFNGWSKRIIK.

In terms of assembly, homodimer.

The protein localises to the nucleus. It localises to the cytoplasm. Its subcellular location is the nucleolus. It is found in the cajal body. The protein resides in the PML body. May confer resistance to the antitumor agent cisplatin. Binds to DNA and RNA. The chain is RAD52 motif-containing protein 1 (RDM1) from Macaca fascicularis (Crab-eating macaque).